A 509-amino-acid chain; its full sequence is Dihydrolipoyl dehydrogenase, mitochondrial (509 aa).

A mitochondrion-targeting transit peptide spans 1–35 (MQSWSRVYCSLAKRGHFNRISHGLQGVSSVPLRTY). An N6-acetyllysine; alternate modification is found at lysine 66. Lysine 66 carries the post-translational modification N6-succinyllysine; alternate. FAD-binding positions include 71–80 (EKNDTLGGTC) and lysine 89. Cysteine 80 and cysteine 85 form a disulfide bridge. N6-acetyllysine; alternate occurs at positions 122, 132, and 143. Residues lysine 122, lysine 132, and lysine 143 each carry the N6-succinyllysine; alternate modification. Glycine 154 contributes to the FAD binding site. An N6-succinyllysine mark is found at lysine 159 and lysine 166. 183 to 185 (TGS) is an FAD binding site. NAD(+) is bound by residues 220–227 (GAGVIGVE) and glutamate 243. 2 positions are modified to N6-succinyllysine: lysine 273 and lysine 277. Valine 278 contacts NAD(+). 2 positions are modified to phosphoserine: serine 285 and serine 297. Glycine 314 contacts NAD(+). Lysine 346 bears the N6-acetyllysine mark. Residues aspartate 355 and 361–364 (MLAH) contribute to the FAD site. Lysine 410 bears the N6-acetyllysine; alternate mark. Lysine 410 is modified (N6-succinyllysine; alternate). Lysine 417 and lysine 420 each carry N6-acetyllysine. At lysine 430 the chain carries N6-succinyllysine. The active-site Proton acceptor is the histidine 487. Phosphoserine is present on serine 502. Lysine 505 is modified (N6-acetyllysine; alternate). N6-succinyllysine; alternate is present on lysine 505.

It belongs to the class-I pyridine nucleotide-disulfide oxidoreductase family. As to quaternary structure, homodimer. Part of the multimeric pyruvate dehydrogenase complex that contains multiple copies of pyruvate dehydrogenase (subunits PDHA (PDHA1 or PDHA2) and PDHB, E1), dihydrolipoamide acetyltransferase (DLAT, E2) and lipoamide dehydrogenase (DLD, E3). These subunits are bound to an inner core composed of about 48 DLAT and 12 PDHX molecules (by non covalent bonds). The 2-oxoglutarate dehydrogenase complex is composed of OGDH (2-oxoglutarate dehydrogenase; E1), DLST (dihydrolipoamide succinyltransferase; E2), DLD (dihydrolipoamide dehydrogenase; E3) and the assembly factor KGD4. It contains multiple copies of the three enzymatic components (E1, E2 and E3). In the nucleus, the 2-oxoglutarate dehydrogenase complex associates with KAT2A. Interacts with PDHX. The cofactor is FAD. Tyrosine phosphorylated.

It is found in the mitochondrion matrix. Its subcellular location is the nucleus. It localises to the cell projection. The protein resides in the cilium. The protein localises to the flagellum. It is found in the cytoplasmic vesicle. Its subcellular location is the secretory vesicle. It localises to the acrosome. The enzyme catalyses N(6)-[(R)-dihydrolipoyl]-L-lysyl-[protein] + NAD(+) = N(6)-[(R)-lipoyl]-L-lysyl-[protein] + NADH + H(+). Lipoamide dehydrogenase is a component of the glycine cleavage system as well as an E3 component of three alpha-ketoacid dehydrogenase complexes (pyruvate-, alpha-ketoglutarate-, and branched-chain amino acid-dehydrogenase complex). The 2-oxoglutarate dehydrogenase complex is mainly active in the mitochondrion. A fraction of the 2-oxoglutarate dehydrogenase complex also localizes in the nucleus and is required for lysine succinylation of histones: associates with KAT2A on chromatin and provides succinyl-CoA to histone succinyltransferase KAT2A. In monomeric form may have additional moonlighting function as serine protease. Involved in the hyperactivation of spermatazoa during capacitation and in the spermatazoal acrosome reaction. The chain is Dihydrolipoyl dehydrogenase, mitochondrial (DLD) from Cricetulus griseus (Chinese hamster).